A 357-amino-acid chain; its full sequence is MADSLVLLTGATGFIGFRILIELLRQGYSVRAVIRSAGKGQWLESRLTAVMKGSDYKDRFETTTVADFVTDGAFDQAAENTSYIIHVASPIVSSDNPDDWEHDFKRVAVKGSIGVLEAAKRSGTVRRVVITSSMVGLFSPKALFAEPSEVPLNAESRIPEMEPPYAHKMLAYQAGKIASINSAEAWIKNEKPAFDLVHMHPSFVTGRDDLATTREDLRKFSSNWHSMQIVLGHKNPIGKPILTCHNDDVARCHVLALDPKVTGNQSFLISCSPEDGSEWDDVKKFVQREFPEAVAQGVLPNDGHMPTVNKGVRFDVRKTEETFGFKHIPYEAQVLDVVKQYLELPEKDEGVEISTTA.

Residue Tyr-172 coordinates NADP(+).

The protein belongs to the NAD(P)-dependent epimerase/dehydratase family. Dihydroflavonol-4-reductase subfamily.

It functions in the pathway mycotoxin biosynthesis. Ketoreductase; part of the gene cluster that mediates the biosynthesis of cercosporin, a light-activated, non-host-selective toxin. The perylenequinone chromophore of cercosporin absorbs light energy to attain an electronically-activated triplet state and produces active oxygen species such as the hydroxyl radical, superoxide, hydrogen peroxide or singlet oxygen upon reaction with oxygen molecules. These reactive oxygen species cause damage to various cellular components including lipids, proteins and nucleic acids. The first step of cercosporin biosynthesis is performed by the polyketide synthase CTB1 which catalyzes the formation of nor-toralactone. The starter unit acyltransferase (SAT) domain of CTB1 initiates polyketide extension by the selective utilization of acetyl-CoA, which is elongated to the heptaketide in the beta-ketoacyl synthase (KS) domain by successive condensations with six malonyl units introduced by the malonyl acyltransferase (MAT) domain. The product template (PT) domain catalyzes C4-C9 and C2-C11 aldol cyclizations and dehydrations to a trihydroxynaphthalene, which is thought to be delivered to the thioesterase (TE) domain for product release. The bifunctional enzyme CTB3 then methylates nor-toralactone to toralactone before conducting an unusual oxidative aromatic ring opening. The O-methyltransferase CTB2 further methylates the nascent OH-6 of the CBT3 product, blocking further oxidation at this site before the reductase CTB6 reduces the 2-oxopropyl ketone at position C7, giving naphthalene. The FAD-dependent monooxygenase CTB5 in concert with the multicopper oxidase CTB12 are responsible for homodimerization of naphthalene with CTB7 installing the dioxepine moiety, finally producing cercosporin. The fasciclin domain-containing protein CTB11 might act with CTB5 and CTB12 whereas the roles of CTB9 and CTB10 have still to be elucidated. The chain is Ketoreductase CTB6 from Cercospora beticola (Sugarbeet leaf spot fungus).